A 122-amino-acid chain; its full sequence is Prefoldin subunit 1 (122 aa).

It belongs to the prefoldin subunit beta family. Heterohexamer of two PFD-alpha type and four PFD-beta type subunits.

Its function is as follows. Binds specifically to cytosolic chaperonin (c-CPN) and transfers target proteins to it. Binds to nascent polypeptide chain and promotes folding in an environment in which there are many competing pathways for nonnative proteins. The polypeptide is Prefoldin subunit 1 (pfdn1) (Danio rerio (Zebrafish)).